Consider the following 145-residue polypeptide: 3-hydroxyacyl-[acyl-carrier-protein] dehydratase FabZ (145 aa).

The active site involves H49.

The protein belongs to the thioester dehydratase family. FabZ subfamily.

Its subcellular location is the cytoplasm. The catalysed reaction is a (3R)-hydroxyacyl-[ACP] = a (2E)-enoyl-[ACP] + H2O. Functionally, involved in unsaturated fatty acids biosynthesis. Catalyzes the dehydration of short chain beta-hydroxyacyl-ACPs and long chain saturated and unsaturated beta-hydroxyacyl-ACPs. This is 3-hydroxyacyl-[acyl-carrier-protein] dehydratase FabZ from Anaplasma phagocytophilum (strain HZ).